A 134-amino-acid polypeptide reads, in one-letter code: Seminal plasma protein PDC-109 (134 aa).

Residues 1–25 (MALQLGLFLIWAGVSVFLQLDPVNG) form the signal peptide. An O-linked (GalNAc...) threonine glycan is attached at Thr-36. Fibronectin type-II domains follow at residues 44 to 88 (PEDE…YCAQ) and 89 to 134 (RDYA…WKYC). 4 cysteine pairs are disulfide-bonded: Cys-49-Cys-73, Cys-63-Cys-86, Cys-94-Cys-119, and Cys-108-Cys-134.

Belongs to the seminal plasma protein family. Homodimer. Post-translationally, O-linked glycan consists of Gal-GalNAc disaccharide which is modified with a sialic acid residue (macro- and/or microheterogeneity account for differences between BSP-A1 and BSP-A2). Major component of seminal plasma.

It localises to the secreted. In terms of biological role, could enhance the fertilizing capacity of bull spermatozoa upon interaction with heparin-like glycosaminoglycans present in the female genital tract. Exhibits both simulatory and inhibitory actions on the release of pituitary gonadotropins. This is Seminal plasma protein PDC-109 from Bos taurus (Bovine).